The sequence spans 474 residues: ATP synthase subunit beta (474 aa).

ATP is bound at residue 151 to 158; sequence GGAGVGKT.

It belongs to the ATPase alpha/beta chains family. As to quaternary structure, F-type ATPases have 2 components, CF(1) - the catalytic core - and CF(0) - the membrane proton channel. CF(1) has five subunits: alpha(3), beta(3), gamma(1), delta(1), epsilon(1). CF(0) has three main subunits: a(1), b(2) and c(9-12). The alpha and beta chains form an alternating ring which encloses part of the gamma chain. CF(1) is attached to CF(0) by a central stalk formed by the gamma and epsilon chains, while a peripheral stalk is formed by the delta and b chains.

It localises to the cell inner membrane. It catalyses the reaction ATP + H2O + 4 H(+)(in) = ADP + phosphate + 5 H(+)(out). Produces ATP from ADP in the presence of a proton gradient across the membrane. The catalytic sites are hosted primarily by the beta subunits. This Ruegeria sp. (strain TM1040) (Silicibacter sp.) protein is ATP synthase subunit beta.